The sequence spans 452 residues: MESSGDKQTSSLYPTVDTSNPEAPINPSSSSSTNNLYPSLDMNDLARNLFPEQPETSSIPVSAPPAATEEVILKISGAILHLIDKSYSVELACGDLEIIRIVQGENVVAVLASVSDEIQWPLTKDENSVKVDESHYFFTLRPTKEISHDSSDEEDGDGGKNTNEMLNYGLTIASKGQEHLLVELEKILEDYSSFSVQEVSEEAKEAGEKVLDVTVARETSPVELTGERKEIVERQCSAYWTTLAPNVEDYSGKAAKLIATGSGHLIKGILWCGDVTMDRLIWGNGFMKRRLSKAEKESEVHPDTLKRIRRVKRMTKMTESVANSILSGVLKVSGFFTSSVANTKVGKKFFSLLPGEVILASLDGFNKVCDAVEVAGRNVMSTSSTVTTELVDHKYGGKAAEATNEGLDAAGYALGTAWVAFKIRKAINPKSVLKPSTLAKTAIRSAASQKKA.

Over residues 1-18 (MESSGDKQTSSLYPTVDT) the composition is skewed to polar residues. A chloroplast-targeting transit peptide spans 1–28 (MESSGDKQTSSLYPTVDTSNPEAPINPS). The tract at residues 1-37 (MESSGDKQTSSLYPTVDTSNPEAPINPSSSSSTNNLY) is disordered. A compositionally biased stretch (low complexity) spans 19–37 (SNPEAPINPSSSSSTNNLY). The 169-residue stretch at 258 to 426 (IATGSGHLIK…AWVAFKIRKA (169 aa)) folds into the Senescence domain.

The protein resides in the plastid. It localises to the chloroplast. The protein is Protein EARLY-RESPONSIVE TO DEHYDRATION 7, chloroplastic of Arabidopsis thaliana (Mouse-ear cress).